A 334-amino-acid polypeptide reads, in one-letter code: Holliday junction branch migration complex subunit RuvB (334 aa).

The segment at 4–184 (ADRLISAEPI…FGIVQRLEFY (181 aa)) is large ATPase domain (RuvB-L). ATP contacts are provided by residues Ile23, Arg24, Gly65, Lys68, Thr69, Thr70, 131 to 133 (EDY), Arg174, Tyr184, and Arg221. Residue Thr69 participates in Mg(2+) binding. The small ATPAse domain (RuvB-S) stretch occupies residues 185 to 255 (QVADLQHIVS…VAMQALDMLN (71 aa)). The head domain (RuvB-H) stretch occupies residues 258-334 (AEGFDYMDRK…YKHFGMVREE (77 aa)). The DNA site is built by Arg294, Arg313, and Arg318.

It belongs to the RuvB family. Homohexamer. Forms an RuvA(8)-RuvB(12)-Holliday junction (HJ) complex. HJ DNA is sandwiched between 2 RuvA tetramers; dsDNA enters through RuvA and exits via RuvB. An RuvB hexamer assembles on each DNA strand where it exits the tetramer. Each RuvB hexamer is contacted by two RuvA subunits (via domain III) on 2 adjacent RuvB subunits; this complex drives branch migration. In the full resolvosome a probable DNA-RuvA(4)-RuvB(12)-RuvC(2) complex forms which resolves the HJ.

The protein localises to the cytoplasm. The enzyme catalyses ATP + H2O = ADP + phosphate + H(+). Its function is as follows. The RuvA-RuvB-RuvC complex processes Holliday junction (HJ) DNA during genetic recombination and DNA repair, while the RuvA-RuvB complex plays an important role in the rescue of blocked DNA replication forks via replication fork reversal (RFR). RuvA specifically binds to HJ cruciform DNA, conferring on it an open structure. The RuvB hexamer acts as an ATP-dependent pump, pulling dsDNA into and through the RuvAB complex. RuvB forms 2 homohexamers on either side of HJ DNA bound by 1 or 2 RuvA tetramers; 4 subunits per hexamer contact DNA at a time. Coordinated motions by a converter formed by DNA-disengaged RuvB subunits stimulates ATP hydrolysis and nucleotide exchange. Immobilization of the converter enables RuvB to convert the ATP-contained energy into a lever motion, pulling 2 nucleotides of DNA out of the RuvA tetramer per ATP hydrolyzed, thus driving DNA branch migration. The RuvB motors rotate together with the DNA substrate, which together with the progressing nucleotide cycle form the mechanistic basis for DNA recombination by continuous HJ branch migration. Branch migration allows RuvC to scan DNA until it finds its consensus sequence, where it cleaves and resolves cruciform DNA. This is Holliday junction branch migration complex subunit RuvB from Serratia proteamaculans (strain 568).